We begin with the raw amino-acid sequence, 299 residues long: Biotin transporter (299 aa).

The next 10 membrane-spanning stretches (helical) occupy residues 2 to 22, 26 to 46, 56 to 76, 81 to 101, 110 to 130, 137 to 157, 172 to 192, 202 to 222, 233 to 253, and 256 to 276; these read ALLI…GEYL, VDSY…FLPF, TISL…MLSF, YLTV…ITLI, LRWG…IIRY, FWVG…GMVG, AFAW…SLLG, LQWS…YFMW, TLGI…LAIW, and QPHW…LWVH. EamA domains follow at residues 3–128 and 139–274; these read LLII…AGII and VGLL…ASLW.

It belongs to the drug/metabolite transporter (DMT) superfamily. 10 TMS drug/metabolite exporter (DME) (TC 2.A.7.3) family.

It is found in the cell inner membrane. It carries out the reaction biotin(in) = biotin(out). In terms of biological role, uptake of biotin. The sequence is that of Biotin transporter from Salmonella typhi.